Consider the following 413-residue polypeptide: Low-salt glycan biosynthesis hexosyltransferase Agl6 (413 aa).

The segment at 1-27 (MSTRSQSESPVDAPQQGATNGQSASDI) is disordered. Positions 16-25 (QGATNGQSAS) are enriched in polar residues. A run of 4 helical transmembrane segments spans residues 270–290 (LFSAPGFGLSVIGVLALVLAW), 304–324 (TGIGGGLLTLAGFQLMLFGAF), 355–375 (IGSVVLLCGLAYGGLLAFTWV), and 389–409 (VVATVAVVIGLQMVFGSFLLG).

Belongs to the glycosyltransferase 2 family.

It is found in the membrane. The protein operates within protein modification; protein glycosylation. It participates in cell surface structure biogenesis; S-layer biogenesis. In terms of biological role, hexosyltransferase involved in N-glycan biosynthetic pathway that takes place under low-salt conditions (1.75 M instead of 3.4 M). Participates in the formation of the tetrasaccharide present at 'Asn-532' of S-layer glycoprotein Csg, consisting of a sulfated hexose, 2 hexoses and rhamnose. Together with Agl5, mediates the addition of sugars 1 and 2 to dolichol phosphate in the tetrasaccharide. This is Low-salt glycan biosynthesis hexosyltransferase Agl6 (agl6) from Haloferax volcanii (strain ATCC 29605 / DSM 3757 / JCM 8879 / NBRC 14742 / NCIMB 2012 / VKM B-1768 / DS2) (Halobacterium volcanii).